We begin with the raw amino-acid sequence, 25 residues long: MVINNNISAINAQRTLKFRQVDLKK.

Belongs to the bacterial flagellin family. As to quaternary structure, the flagellum consists of an outer layer composed of two sheath proteins, flaA1 (44 kDa) and flaA2 (35 kDa) around a core that contains three proteins flaB1 (37 kDa), flaB2 (34 kDa) and flaB3 (32 kDa).

The protein localises to the periplasmic flagellum. The protein resides in the periplasm. In terms of biological role, component of the core of the flagella. The sequence is that of Flagellar filament core protein flaB1 (flaB1) from Brachyspira hyodysenteriae (Treponema hyodysenteriae).